Here is an 811-residue protein sequence, read N- to C-terminus: Receptor-like protein 46 (811 aa).

Residues 1 to 21 form the signal peptide; that stretch reads MSKQCLLSCFLFFCFFIPQLS. Residues 22–782 lie on the Extracellular side of the membrane; it reads FSCPQDQRQS…EEEDKEEEET (761 aa). 4 N-linked (GlcNAc...) asparagine glycosylation sites follow: asparagine 46, asparagine 71, asparagine 128, and asparagine 143. LRR repeat units lie at residues 104-128, 129-153, 155-177, 178-201, 203-225, 226-249, 251-273, 275-298, 299-322, 324-348, 349-369, 370-395, 397-419, 421-442, 443-466, 468-488, 490-510, 511-534, 536-560, 561-583, 643-665, 666-688, 690-713, and 714-738; these read INSL…AFVN, LTSL…LFSL, NLQR…IKEL, KNLQ…IGSL, ELLT…VSRL, TKLK…IGNL, NLST…IHNL, NLET…WLFG, LQKL…GYVF, QFKL…LKNQ, TALV…PKWL, ADLK…LFQR, SLYY…IGES, VMVL…ITKI, PFLK…RPES, LEWL…YFGG, TSML…NFRN, LSYL…LISQ, SSSV…ISNL, TSLK…SLGN, LYTL…LGNL, KSLK…SFGD, EKVE…LSKL, and SELN…QLDR. Residue asparagine 215 is glycosylated (N-linked (GlcNAc...) asparagine). Asparagine 251 carries an N-linked (GlcNAc...) asparagine glycan. N-linked (GlcNAc...) asparagine glycosylation is present at asparagine 347. N-linked (GlcNAc...) asparagine glycans are attached at residues asparagine 376, asparagine 407, and asparagine 430. 2 N-linked (GlcNAc...) asparagine glycosylation sites follow: asparagine 499 and asparagine 510. N-linked (GlcNAc...) asparagine glycans are attached at residues asparagine 546, asparagine 559, and asparagine 583. N-linked (GlcNAc...) asparagine glycans are attached at residues asparagine 672 and asparagine 701. The N-linked (GlcNAc...) asparagine glycan is linked to asparagine 747. Residues 783–803 traverse the membrane as a helical segment; it reads IFSWNAAAIGCSCGFLIAVVF. Residues 804 to 811 lie on the Cytoplasmic side of the membrane; the sequence is MSYNELWK.

Belongs to the RLP family.

It localises to the cell membrane. This Arabidopsis thaliana (Mouse-ear cress) protein is Receptor-like protein 46.